Reading from the N-terminus, the 479-residue chain is Pup--protein ligase (479 aa).

A Mg(2+)-binding site is contributed by Glu17. Arg62 is an ATP binding site. Tyr64 provides a ligand contact to Mg(2+). The Proton acceptor role is filled by Asp66. Mg(2+) is bound at residue Glu72. ATP is bound by residues Ser75 and Trp432.

The protein belongs to the Pup ligase/Pup deamidase family. Pup-conjugating enzyme subfamily.

It carries out the reaction ATP + [prokaryotic ubiquitin-like protein]-L-glutamate + [protein]-L-lysine = ADP + phosphate + N(6)-([prokaryotic ubiquitin-like protein]-gamma-L-glutamyl)-[protein]-L-lysine.. It functions in the pathway protein degradation; proteasomal Pup-dependent pathway. The protein operates within protein modification; protein pupylation. Catalyzes the covalent attachment of the prokaryotic ubiquitin-like protein modifier Pup to the proteasomal substrate proteins, thereby targeting them for proteasomal degradation. This tagging system is termed pupylation. The ligation reaction involves the side-chain carboxylate of the C-terminal glutamate of Pup and the side-chain amino group of a substrate lysine. This Corynebacterium diphtheriae (strain ATCC 700971 / NCTC 13129 / Biotype gravis) protein is Pup--protein ligase.